We begin with the raw amino-acid sequence, 337 residues long: GTP 3',8-cyclase (337 aa).

In terms of domain architecture, Radical SAM core spans 18–242 (NFGRRFHYLR…DKADILDGPA (225 aa)). Arg-27 contributes to the GTP binding site. Positions 34 and 38 each coordinate [4Fe-4S] cluster. Position 40 (Tyr-40) interacts with S-adenosyl-L-methionine. Cys-41 is a [4Fe-4S] cluster binding site. Arg-76 is a GTP binding site. Position 80 (Gly-80) interacts with S-adenosyl-L-methionine. Thr-107 contacts GTP. Ser-131 provides a ligand contact to S-adenosyl-L-methionine. Residue Lys-168 coordinates GTP. Residue Met-202 coordinates S-adenosyl-L-methionine. [4Fe-4S] cluster is bound by residues Cys-265 and Cys-268. 270–272 (RLR) lines the GTP pocket. Cys-282 is a [4Fe-4S] cluster binding site.

This sequence belongs to the radical SAM superfamily. MoaA family. Monomer and homodimer. It depends on [4Fe-4S] cluster as a cofactor.

It catalyses the reaction GTP + AH2 + S-adenosyl-L-methionine = (8S)-3',8-cyclo-7,8-dihydroguanosine 5'-triphosphate + 5'-deoxyadenosine + L-methionine + A + H(+). It participates in cofactor biosynthesis; molybdopterin biosynthesis. In terms of biological role, catalyzes the cyclization of GTP to (8S)-3',8-cyclo-7,8-dihydroguanosine 5'-triphosphate. The polypeptide is GTP 3',8-cyclase (Shewanella denitrificans (strain OS217 / ATCC BAA-1090 / DSM 15013)).